The sequence spans 376 residues: Glutamate 5-kinase (376 aa).

Lys-15 provides a ligand contact to ATP. Positions 55, 141, and 153 each coordinate substrate. ATP is bound by residues Ser-173–Asp-174 and Thr-215–Lys-221. Positions Ala-280–Ala-361 constitute a PUA domain.

Belongs to the glutamate 5-kinase family.

The protein localises to the cytoplasm. It catalyses the reaction L-glutamate + ATP = L-glutamyl 5-phosphate + ADP. Its pathway is amino-acid biosynthesis; L-proline biosynthesis; L-glutamate 5-semialdehyde from L-glutamate: step 1/2. Functionally, catalyzes the transfer of a phosphate group to glutamate to form L-glutamate 5-phosphate. This chain is Glutamate 5-kinase, found in Salinibacter ruber (strain DSM 13855 / M31).